The sequence spans 100 residues: Large ribosomal subunit protein bL21 (100 aa).

Belongs to the bacterial ribosomal protein bL21 family. In terms of assembly, part of the 50S ribosomal subunit. Contacts protein L20.

This protein binds to 23S rRNA in the presence of protein L20. The polypeptide is Large ribosomal subunit protein bL21 (Mycoplasma genitalium (strain ATCC 33530 / DSM 19775 / NCTC 10195 / G37) (Mycoplasmoides genitalium)).